A 429-amino-acid chain; its full sequence is Esterase/beta-lactamase LipL (429 aa).

The Acyl-ester intermediate role is filled by Ser-88.

The protein belongs to the beta-lactamase family.

It is found in the secreted. It localises to the cell wall. The protein resides in the cell membrane. The enzyme catalyses a fatty acid ester + H2O = an aliphatic alcohol + a fatty acid + H(+). The catalysed reaction is an acetyl ester + H2O = an aliphatic alcohol + acetate + H(+). It catalyses the reaction a butanoate ester + H2O = an aliphatic alcohol + butanoate + H(+). It carries out the reaction an octanoate ester + H2O = an aliphatic alcohol + octanoate + H(+). The enzyme catalyses decanoate ester + H2O = decanoate + an aliphatic alcohol + H(+). The catalysed reaction is a dodecanoate ester + H2O = an aliphatic alcohol + dodecanoate + H(+). It catalyses the reaction a tetradecanoate ester + H2O = an aliphatic alcohol + tetradecanoate + H(+). It carries out the reaction hexadecanoate ester + H2O = an aliphatic alcohol + hexadecanoate + H(+). The enzyme catalyses octadecanoate ester + H2O = an aliphatic alcohol + octadecanoate + H(+). The catalysed reaction is a hexanoate ester + H2O = an aliphatic alcohol + hexanoate + H(+). It catalyses the reaction a beta-lactam + H2O = a substituted beta-amino acid. Esterase and beta-lactamase activities are inhibited by the active site residue modifiers phenylmethanesulfonylflouride (PMSF) and diethylpyrocarbonate (DEPC). Its function is as follows. Shows both esterase and beta-lactamase activities, with a much higher activity against phenyl esters than against beta-lactams. Shows esterase activity against both long-chain and short-chain p-nitrophenol (pNP) esters, with a preference for shorter chain esters. Hydrolyzes substrates containing beta-lactam ring such as nitrocefin and ampicillin. Functions as an immunogen that activates both humoral and cell-mediated responses. The chain is Esterase/beta-lactamase LipL from Mycobacterium tuberculosis (strain ATCC 25618 / H37Rv).